Here is a 501-residue protein sequence, read N- to C-terminus: DDB1- and CUL4-associated factor 12-like protein 1 (501 aa).

The segment covering 1–37 (MRQADSQTQPSPAEQETPQPAGPSNRSPPTMGPQQTG) has biased composition (polar residues). Residues 1–67 (MRQADSQTQP…PAAPMATAGE (67 aa)) are disordered. 4 WD repeats span residues 185–225 (PPSC…PVCL), 230–268 (GHRD…FNGS), 298–337 (PGNR…SRLL), and 384–423 (SREG…FLEE).

Belongs to the WD repeat DCAF12 family.

The protein is DDB1- and CUL4-associated factor 12-like protein 1 (Dcaf12l1) of Mus musculus (Mouse).